A 470-amino-acid chain; its full sequence is Meiosis-specific with OB domain-containing protein (470 aa).

The segment at residues Ile167–Arg272 is a DNA-binding region (OB).

It belongs to the MEIOB family. In terms of assembly, component of a multiprotein complex with RPA2 and SPATA22. Interacts with SPATA22. Interacts with the complex BRME1:HSF2BP:BRCA2.

It is found in the cytoplasm. The protein localises to the nucleus. The protein resides in the chromosome. In terms of biological role, single-stranded DNA-binding protein required for homologous recombination in meiosis I. Required for double strand breaks (DSBs) repair and crossover formation and promotion of faithful and complete synapsis. Not required for the initial loading of recombinases but required to maintain a proper number of RAD51 and DMC1 foci after the zygotene stage. May act by ensuring the stabilization of recombinases, which is required for successful homology search and meiotic recombination. Displays Single-stranded DNA 3'-5' exonuclease activity in vitro. This chain is Meiosis-specific with OB domain-containing protein, found in Rattus norvegicus (Rat).